Consider the following 242-residue polypeptide: Aquaporin (242 aa).

Residues 1 to 11 (MNTSTKLICQK) lie on the Cytoplasmic side of the membrane. A helical membrane pass occupies residues 12–32 (LFAEMLCSCIFGFAVYSAILN). At 33-39 (TKASNSS) the chain is on the extracellular side. Residues 40–60 (ISSTTVGLTVCFSSISLIYTF) form a helical membrane-spanning segment. The Cytoplasmic portion of the chain corresponds to 61–83 (CDHSVAHFNPAITIAAICTGKLD). An NPA motif is present at residues 69-71 (NPA). Residues 84–104 (ILLGIGYVIAQLIGFILATLL) form a helical membrane-spanning segment. Over 105–133 (TVVCFPYGYLKTMEFIASARISDDISTVN) the chain is Extracellular. Residues 134 to 154 (LFFTEFILSFILVFIAFEVGI) traverse the membrane as a helical segment. Topologically, residues 155-175 (NAIREPGVTLFVGIKQIDRSK) are cytoplasmic. Residues 176–196 (FAPLTIGITLGFLAFLASTTS) traverse the membrane as a helical segment. At 197-217 (GGAFNPGIVWGPAIMGGNFDD) the chain is on the extracellular side. Residues 201 to 203 (NPG) carry the NPG motif. Residues 218-238 (FVIYIISELSGGLLGAFIQVF) form a helical membrane-spanning segment. Over 239-242 (LLFK) the chain is Cytoplasmic.

This sequence belongs to the MIP/aquaporin (TC 1.A.8) family.

It localises to the cell membrane. Its function is as follows. Water channel required to facilitate the transport of water across membranes. Involved in osmotolerance. The sequence is that of Aquaporin (AQP) from Enterocytozoon bieneusi (strain H348) (Microsporidian parasite).